The following is a 2005-amino-acid chain: Structural maintenance of chromosomes flexible hinge domain-containing protein 1 (2005 aa).

A compositionally biased stretch (gly residues) spans 1-13 (MAAADGGGPGGAS). The interval 1–23 (MAAADGGGPGGASVGTEEDGGGV) is disordered. At Ala-2 the chain carries N-acetylalanine. The segment at 111 to 702 (TKERIDFLPH…LSVTWPEGDE (592 aa)) is ATPase activity domain. Lys-1349 carries the post-translational modification N6-acetyllysine. Glycyl lysine isopeptide (Lys-Gly) (interchain with G-Cter in SUMO2) cross-links involve residues Lys-1374 and Lys-1496. Phosphothreonine is present on Thr-1499. In terms of domain architecture, SMC hinge spans 1720–1847 (GDVLGKIAHL…DNLDAANHYR (128 aa)). At Lys-1802 the chain carries N6-succinyllysine. Residue Ser-1974 is modified to Phosphoserine.

It belongs to the SMC family. Highly divergent. In terms of assembly, homodimer; homodimerizes via its SMC hinge domain. Interacts with LRIF1. In terms of processing, sumoylated with SUMO1.

The protein localises to the chromosome. The catalysed reaction is ATP + H2O = ADP + phosphate + H(+). Non-canonical member of the structural maintenance of chromosomes (SMC) protein family that plays a key role in epigenetic silencing by regulating chromatin architecture. Promotes heterochromatin formation in both autosomes and chromosome X, probably by mediating the merge of chromatin compartments. Plays a key role in chromosome X inactivation in females by promoting the spreading of heterochromatin. Recruited to inactivated chromosome X by Xist RNA and acts by mediating the merge of chromatin compartments: promotes random chromatin interactions that span the boundaries of existing structures, leading to create a compartment-less architecture typical of inactivated chromosome X. Required to facilitate Xist RNA spreading. Also required for silencing of a subset of clustered autosomal loci in somatic cells, such as the DUX4 locus. Has ATPase activity; may participate in structural manipulation of chromatin in an ATP-dependent manner as part of its role in gene expression regulation. Also plays a role in DNA repair: localizes to sites of DNA double-strand breaks in response to DNA damage to promote the repair of DNA double-strand breaks. Acts by promoting non-homologous end joining (NHEJ) and inhibiting homologous recombination (HR) repair. The sequence is that of Structural maintenance of chromosomes flexible hinge domain-containing protein 1 from Homo sapiens (Human).